Consider the following 631-residue polypeptide: Peptide-N(4)-(N-acetyl-beta-glucosaminyl)asparagine amidase (631 aa).

In terms of domain architecture, PUB spans 34–97 (EAVRILLVLL…PSSNAYTLPT (64 aa)). Serine 126 is modified (phosphoserine). Zn(2+)-binding residues include cysteine 246, cysteine 249, cysteine 272, and cysteine 273. Cysteine 296 (nucleophile) is an active-site residue. Catalysis depends on residues histidine 323 and aspartate 340. The PAW domain occupies 441–631 (ELKGRSSGSL…YPFDLQVQLH (191 aa)).

This sequence belongs to the transglutaminase-like superfamily. PNGase family. Requires Zn(2+) as cofactor.

The protein resides in the cytoplasm. It catalyses the reaction Hydrolysis of an N(4)-(acetyl-beta-D-glucosaminyl)asparagine residue in which the glucosamine residue may be further glycosylated, to yield a (substituted) N-acetyl-beta-D-glucosaminylamine and a peptide containing an aspartate residue.. Specifically deglycosylates the denatured form of N-linked glycoproteins in the cytoplasm and assists their proteasome-mediated degradation. Cleaves the beta-aspartyl-glucosamine (GlcNAc) of the glycan and the amide side chain of Asn, converting Asn to Asp. Prefers proteins containing high-mannose over those bearing complex type oligosaccharides. Can recognize misfolded proteins in the endoplasmic reticulum that are exported to the cytosol to be destroyed and deglycosylate them, while it has no activity toward native proteins. Deglycosylation is a prerequisite for subsequent proteasome-mediated degradation of some, but not all, misfolded glycoproteins. This is Peptide-N(4)-(N-acetyl-beta-glucosaminyl)asparagine amidase (Pngl) from Drosophila melanogaster (Fruit fly).